The following is a 178-amino-acid chain: Large ribosomal subunit protein uL6 (178 aa).

This sequence belongs to the universal ribosomal protein uL6 family. Part of the 50S ribosomal subunit.

Its function is as follows. This protein binds to the 23S rRNA, and is important in its secondary structure. It is located near the subunit interface in the base of the L7/L12 stalk, and near the tRNA binding site of the peptidyltransferase center. This chain is Large ribosomal subunit protein uL6, found in Helicobacter acinonychis (strain Sheeba).